The chain runs to 820 residues: Serine/threonine-protein phosphatase 4 regulatory subunit 3B (820 aa).

A WH1 domain is found at 1-100 (MSDTRRRVKV…DEIWEKICQV (100 aa)). 2 positions are modified to phosphoserine: S117 and S663. A disordered region spans residues 687-820 (EDDDEEGKAV…SPRKRPRLGS (134 aa)). Residues 701 to 732 (EKSKTEDDFPDSYEKFMETKKAKESEDKENLP) are compositionally biased toward basic and acidic residues. The span at 744–789 (FSHSPSATNGTNSTNSKSVVSQTTPASSNVASSKTTSLATSVTATK) shows a compositional bias: polar residues. A compositionally biased stretch (acidic residues) spans 798-809 (YPDDEEEDEEEE). A Phosphoserine modification is found at S811.

It belongs to the SMEK family. In terms of assembly, serine/threonine-protein phosphatase 4 (PP4) occurs in different assemblies of the catalytic and one or more regulatory subunits. Component of the PP4 complex PPP4C-PPP4R2-PPP4R3B.

It is found in the cytoplasm. It localises to the cytoskeleton. Its subcellular location is the microtubule organizing center. The protein resides in the centrosome. The protein localises to the nucleus. Functionally, regulatory subunit of serine/threonine-protein phosphatase 4 (PP4). May regulate the activity of PPP4C at centrosomal microtubule organizing centers. This chain is Serine/threonine-protein phosphatase 4 regulatory subunit 3B, found in Mus musculus (Mouse).